The chain runs to 126 residues: Histone H2B 1.1 (126 aa).

Over residues 1 to 12 (MPEPAKSAPAPK) the composition is skewed to low complexity. The interval 1–35 (MPEPAKSAPAPKKGSKKAVTKTQKKDGKKRRKSRK) is disordered. N6-acetyllysine occurs at positions 6 and 13. A Phosphoserine modification is found at Ser15. N6-acetyllysine occurs at positions 16 and 21. An O-linked (GlcNAc) serine glycan is attached at Ser113. Lys121 participates in a covalent cross-link: Glycyl lysine isopeptide (Lys-Gly) (interchain with G-Cter in ubiquitin).

The protein belongs to the histone H2B family. As to quaternary structure, the nucleosome is a histone octamer containing two molecules each of H2A, H2B, H3 and H4 assembled in one H3-H4 heterotetramer and two H2A-H2B heterodimers. The octamer wraps approximately 147 bp of DNA. In terms of processing, monoubiquitination of Lys-121 by BRE1 gives a specific tag for epigenetic transcriptional activation and is also prerequisite for histone H3 'Lys-4' and 'Lys-79' methylation. Phosphorylated on Ser-15 during developmentally programmed apoptosis; which may facilitate apoptotic chromatin condensation. Post-translationally, glcNAcylation at Ser-113 promotes monoubiquitination of Lys-121. It fluctuates in response to extracellular glucose, and associates with transcribed genes.

The protein resides in the nucleus. It is found in the chromosome. Its function is as follows. Core component of nucleosome. Nucleosomes wrap and compact DNA into chromatin, limiting DNA accessibility to the cellular machineries which require DNA as a template. Histones thereby play a central role in transcription regulation, DNA repair, DNA replication and chromosomal stability. DNA accessibility is regulated via a complex set of post-translational modifications of histones, also called histone code, and nucleosome remodeling. This is Histone H2B 1.1 from Xenopus laevis (African clawed frog).